A 235-amino-acid polypeptide reads, in one-letter code: Cytochrome c oxidase subunit 2 (235 aa).

Residues 1–14 are Mitochondrial intermembrane-facing; it reads MPYPMQLGFQDATS. The chain crosses the membrane as a helical span at residues 15–45; that stretch reads PIMEELMYFHDHTLMIVFLISSLVLYIIILM. Residues 46–59 lie on the Mitochondrial matrix side of the membrane; that stretch reads LTTKLTHTSTMDAQ. A helical transmembrane segment spans residues 60 to 87; sequence EVETIWTILPAVILILIALPSLRILYMM. At 88–235 the chain is on the mitochondrial intermembrane side; that stretch reads DEIYNPYLTV…MQSFLSYLYI (148 aa). His161, Cys196, Glu198, Cys200, His204, and Met207 together coordinate Cu cation. Glu198 is a Mg(2+) binding site. Residue Tyr218 is modified to Phosphotyrosine.

The protein belongs to the cytochrome c oxidase subunit 2 family. In terms of assembly, component of the cytochrome c oxidase (complex IV, CIV), a multisubunit enzyme composed of 14 subunits. The complex is composed of a catalytic core of 3 subunits MT-CO1, MT-CO2 and MT-CO3, encoded in the mitochondrial DNA, and 11 supernumerary subunits COX4I, COX5A, COX5B, COX6A, COX6B, COX6C, COX7A, COX7B, COX7C, COX8 and NDUFA4, which are encoded in the nuclear genome. The complex exists as a monomer or a dimer and forms supercomplexes (SCs) in the inner mitochondrial membrane with NADH-ubiquinone oxidoreductase (complex I, CI) and ubiquinol-cytochrome c oxidoreductase (cytochrome b-c1 complex, complex III, CIII), resulting in different assemblies (supercomplex SCI(1)III(2)IV(1) and megacomplex MCI(2)III(2)IV(2)). Found in a complex with TMEM177, COA6, COX18, COX20, SCO1 and SCO2. Interacts with TMEM177 in a COX20-dependent manner. Interacts with COX20. Interacts with COX16. Cu cation is required as a cofactor.

The protein localises to the mitochondrion inner membrane. It carries out the reaction 4 Fe(II)-[cytochrome c] + O2 + 8 H(+)(in) = 4 Fe(III)-[cytochrome c] + 2 H2O + 4 H(+)(out). Component of the cytochrome c oxidase, the last enzyme in the mitochondrial electron transport chain which drives oxidative phosphorylation. The respiratory chain contains 3 multisubunit complexes succinate dehydrogenase (complex II, CII), ubiquinol-cytochrome c oxidoreductase (cytochrome b-c1 complex, complex III, CIII) and cytochrome c oxidase (complex IV, CIV), that cooperate to transfer electrons derived from NADH and succinate to molecular oxygen, creating an electrochemical gradient over the inner membrane that drives transmembrane transport and the ATP synthase. Cytochrome c oxidase is the component of the respiratory chain that catalyzes the reduction of oxygen to water. Electrons originating from reduced cytochrome c in the intermembrane space (IMS) are transferred via the dinuclear copper A center (CU(A)) of subunit 2 and heme A of subunit 1 to the active site in subunit 1, a binuclear center (BNC) formed by heme A3 and copper B (CU(B)). The BNC reduces molecular oxygen to 2 water molecules using 4 electrons from cytochrome c in the IMS and 4 protons from the mitochondrial matrix. This chain is Cytochrome c oxidase subunit 2 (MT-CO2), found in Didelphis virginiana (North American opossum).